The sequence spans 25 residues: Pregnancy-associated glycoprotein 59g (25 aa).

Asn4 carries an N-linked (GlcNAc...) asparagine glycan.

It belongs to the peptidase A1 family. Highly expressed in the placenta between day 60 and day 100 of gestation.

The protein localises to the secreted. It is found in the extracellular space. The polypeptide is Pregnancy-associated glycoprotein 59g (Ovis aries (Sheep)).